The sequence spans 470 residues: 6-phospho-beta-galactosidase (470 aa).

D-galactose 6-phosphate contacts are provided by Gln19, His116, Asn159, Glu160, and Asn297. The active-site Proton donor is the Glu160. Glu375 acts as the Nucleophile in catalysis. D-galactose 6-phosphate-binding residues include Ser430, Trp431, Lys437, and Tyr439.

The protein belongs to the glycosyl hydrolase 1 family.

It catalyses the reaction a 6-phospho-beta-D-galactoside + H2O = D-galactose 6-phosphate + an alcohol. The protein operates within carbohydrate metabolism; lactose degradation; D-galactose 6-phosphate and beta-D-glucose from lactose 6-phosphate: step 1/1. The polypeptide is 6-phospho-beta-galactosidase (Staphylococcus epidermidis (strain ATCC 35984 / DSM 28319 / BCRC 17069 / CCUG 31568 / BM 3577 / RP62A)).